An 827-amino-acid polypeptide reads, in one-letter code: SID1 transmembrane family member 1 (827 aa).

The first 19 residues, 1 to 19 (MRGCLRLALLCALPWLLLA), serve as a signal peptide directing secretion. At 20–309 (ASPGHPAKSP…SIKESVYVKS (290 aa)) the chain is on the extracellular side. 5 N-linked (GlcNAc...) asparagine glycosylation sites follow: Asn57, Asn67, Asn83, Asn136, and Asn282. Residues 310-330 (SLFSVFIFLSFYLGCLLVGFV) traverse the membrane as a helical segment. At 331-442 (HYLRFQRKSI…DRRIVSKKYK (112 aa)) the chain is on the cytoplasmic side. The interval 355 to 408 (ASHPIAASTPEGSNYGTIDESSSSPGRQMSSSDGGPPGQSDTDSSVEESDFDTM) is disordered. Polar residues predominate over residues 364-374 (PEGSNYGTIDE). Low complexity predominate over residues 375 to 397 (SSSSPGRQMSSSDGGPPGQSDTD). A compositionally biased stretch (acidic residues) spans 398 to 408 (SSVEESDFDTM). A helical membrane pass occupies residues 443–463 (IYFWNIITIAVFYALPVIQLV). The Extracellular portion of the chain corresponds to 464–494 (ITYQTVVNVTGNQDICYYNFLCAHPLGVLSA). The N-linked (GlcNAc...) asparagine glycan is linked to Asn471. Residues 495-515 (FNNILSNLGHVLLGFLFLLIV) form a helical membrane-spanning segment. The Cytoplasmic segment spans residues 516 to 541 (LRRDILHRRALEAKDIFAVEYGIPKH). A helical transmembrane segment spans residues 542–562 (FGLFYAMGIALMMEGVLSACY). Residues 563-572 (HVCPNYSNFQ) lie on the Extracellular side of the membrane. Asn567 is a glycosylation site (N-linked (GlcNAc...) asparagine). The chain crosses the membrane as a helical span at residues 573 to 590 (FDTSFMYMIAGLCMLKLY). The Cytoplasmic segment spans residues 591 to 600 (QTRHPDINAS). Residues 601–621 (AYSAYASFAVVIMVTVLGVVF) traverse the membrane as a helical segment. At 622-626 (GKNDV) the chain is on the extracellular side. A helical membrane pass occupies residues 627-647 (WFWVIFSAIHVLASLALSTQI). At 648-683 (YYMGRFKIDLGIFRRAAMVFYTDCIQQCSRPLYMDR) the chain is on the cytoplasmic side. A helical membrane pass occupies residues 684–704 (MVLLVVGNLVNWSFALFGLIY). At 705 to 710 (RPRDFA) the chain is on the extracellular side. Residues 711–731 (SYMLGIFICNLLLYLAFYIIM) form a helical membrane-spanning segment. At 732 to 741 (KLRSSEKVLP) the chain is on the cytoplasmic side. The chain crosses the membrane as a helical span at residues 742 to 762 (VPLFCIVATAVMWAAALYFFF). Over 763–791 (QNLSSWEGTPAESREKNRECILLDFFDDH) the chain is Extracellular. Asn764 carries N-linked (GlcNAc...) asparagine glycosylation. A helical membrane pass occupies residues 792–812 (DIWHFLSATALFFSFLVLLTL). Residues 813–827 (DDDLDVVRRDQIPVF) lie on the Cytoplasmic side of the membrane.

It belongs to the SID1 family.

It is found in the membrane. Its function is as follows. In vitro binds long double-stranded RNA (dsRNA) (500 and 700 base pairs), but not dsRNA shorter than 300 bp. Not involved in RNA autophagy, a process in which RNA is directly imported into lysosomes in an ATP-dependent manner, and degraded. This Homo sapiens (Human) protein is SID1 transmembrane family member 1 (SIDT1).